A 322-amino-acid polypeptide reads, in one-letter code: Glucokinase (322 aa).

Residue 10–15 participates in ATP binding; the sequence is GDIGGT.

It belongs to the bacterial glucokinase family.

It is found in the cytoplasm. It carries out the reaction D-glucose + ATP = D-glucose 6-phosphate + ADP + H(+). The protein is Glucokinase of Hahella chejuensis (strain KCTC 2396).